The chain runs to 493 residues: Farnesoate epoxidase (493 aa).

An N-terminal signal peptide occupies residues 1 to 24 (MLALIVLCFILFFYIISRRHRGLC). Cys-433 serves as a coordination point for heme.

This sequence belongs to the cytochrome P450 family. It depends on heme as a cofactor. In terms of tissue distribution, constitutively expressed in corpora allata from the first instar larval to adult stages.

It carries out the reaction (2E,6E)-farnesoate + reduced [NADPH--hemoprotein reductase] + O2 = juvenile hormone III carboxylate + oxidized [NADPH--hemoprotein reductase] + H2O + H(+). In terms of biological role, catalyzes the conversion of farnesoate to juvenile hormone III acid in juvenile hormone biosynthesis. The polypeptide is Farnesoate epoxidase (Bombyx mori (Silk moth)).